We begin with the raw amino-acid sequence, 320 residues long: MQTRKTFSWIKEQITRSISASLMIYIITRTSISSAYPIFAQQGYENPREATGRIVCANCHLANKPVDIEVPQAVLPDTVFEAVVRIPYDMQLKQVLANGKKGALNVGAVLILPEGFELAPVDRISPEMKERIGNLSFQSYRPTKKNILVIGPVPGQKYSEITFPILSPDPATKKDVHFLKYPIYVGGNRGRGQIYPDGSKSNNTVYNATAAGIVGKIIRKEKGGYEITITDASDGRQVVDIIPPGPELLVSEGESIKFDQPLTSNPNVGGFGQGDAEIVLQDPLRVQGLLFFLASVILAQIFLVLKKKQFEKVQLSEMNF.

Residues 1–35 (MQTRKTFSWIKEQITRSISASLMIYIITRTSISSA) form the signal peptide. Heme-binding residues include tyrosine 36, cysteine 56, cysteine 59, and histidine 60. The chain crosses the membrane as a helical span at residues 286–306 (VQGLLFFLASVILAQIFLVLK).

It belongs to the cytochrome f family. In terms of assembly, the 4 large subunits of the cytochrome b6-f complex are cytochrome b6, subunit IV (17 kDa polypeptide, petD), cytochrome f and the Rieske protein, while the 4 small subunits are PetG, PetL, PetM and PetN. The complex functions as a dimer. Heme is required as a cofactor.

It localises to the plastid. It is found in the chloroplast thylakoid membrane. In terms of biological role, component of the cytochrome b6-f complex, which mediates electron transfer between photosystem II (PSII) and photosystem I (PSI), cyclic electron flow around PSI, and state transitions. The chain is Cytochrome f from Panax ginseng (Korean ginseng).